A 975-amino-acid chain; its full sequence is Protein spalten (975 aa).

2 disordered regions span residues 1–31 (MKKM…QLAQ) and 64–99 (NLAQ…SNNN). The span at 8–17 (NKKEKKEEQS) shows a compositional bias: basic and acidic residues. Residues 21–70 (SSLAQQHQLAQQQYQLQQQQLQLQYQQHQQQLQLAQQQKQNEQNLAQLST) are a coiled coil. The 345-residue stretch at 114-458 (FCGTIMILGH…DAEKRGFTTP (345 aa)) folds into the G-alpha domain. The tract at residues 117 to 130 (TIMILGHTESGKTT) is G1 motif. Residues 122–129 (GHTESGKT), 261–267 (ISAYDQK), 286–290 (GCSGK), and 373–376 (NTSD) each bind GTP. A G2 motif region spans residues 259–267 (DIISAYDQK). Residues 282–291 (VDLFGCSGKQ) are G3 motif. Residues 369-376 (YLIFNTSD) are G4 motif. Residues 427-432 (VNLLDK) form a G5 motif region. 2 disordered regions span residues 455-520 (FTTP…GSST) and 541-700 (DNDS…VGSK). Low complexity-rich tracts occupy residues 460-478 (NQSN…SRNS), 500-515 (LKNV…NTTT), and 544-587 (SSYS…NNAT). The span at 595-688 (PPKEPKPVKP…DGAAESKKNG (94 aa)) shows a compositional bias: basic and acidic residues. Residues 704-972 (ESGFGSLQGR…DNITVLVVIL (269 aa)) enclose the PPM-type phosphatase domain. Mn(2+) contacts are provided by Asp749, Gly750, Asp920, and Asp963.

The protein in the N-terminal section; belongs to the G-alpha family. It in the C-terminal section; belongs to the PP2C family. As to quaternary structure, g proteins are composed of 3 units; alpha, beta and gamma. The alpha chain contains the guanine nucleotide binding site. The cofactor is Mg(2+). It depends on Mn(2+) as a cofactor.

It localises to the cytoplasm. The protein localises to the cytosol. Its subcellular location is the cell membrane. The enzyme catalyses O-phospho-L-seryl-[protein] + H2O = L-seryl-[protein] + phosphate. It carries out the reaction O-phospho-L-threonyl-[protein] + H2O = L-threonyl-[protein] + phosphate. Inhibited by 50 mM NaF (sodium fluoride). Involved in cell-type differentiation and morphogenesis. Dephosphorylates casein; in vitro. May also be involved as modulators or transducers in various transmembrane signaling systems. This chain is Protein spalten (spnA), found in Dictyostelium discoideum (Social amoeba).